Reading from the N-terminus, the 922-residue chain is Non-centrosomal microtubule array protein 1 (922 aa).

Polar residues predominate over residues 1-10 (MSNERVSTGS). Disordered stretches follow at residues 1-134 (MSNE…HLPP), 250-277 (PVRL…TVPR), 465-491 (KSRH…QMNL), and 533-563 (TQKE…SNLS). 2 stretches are compositionally biased toward basic and acidic residues: residues 43–54 (SMERKDMPDRPK) and 70–94 (PKDR…KECA). Positions 99–113 (SNTSSEHSSRSNSST) are enriched in low complexity. Basic and acidic residues-rich tracts occupy residues 256 to 276 (RGDT…DTVP) and 468 to 484 (HLSE…ERRG). Low complexity predominate over residues 539 to 563 (SHSTPSQSRHSSSKSSHFNGSSNLS). Residues 564–728 (TSEQLRLQEM…RSVSTLRLEQ (165 aa)) are a coiled coil.

The protein localises to the cytoplasm. It is found in the cytoskeleton. Its subcellular location is the apical cell membrane. The protein resides in the cell junction. It localises to the hemidesmosome. The protein localises to the adherens junction. In terms of biological role, plays a role in the assembly of microtubule arrays in the germline acting redundantly with ptrn-1 to control circumferential microtubule assembly along the body which is necessary for larval development, viability, and morphology and integrity of the epidermis. Required for microtubule stability and anchorage by binding to microtubule minus ends. Recruited to hemidesomosomes in early embryonic elongation to direct the nucleation and growth of non-centrosomal microtubules. Its function is as follows. Required for normal nuclear migration in the embryonic epidermis. Directs the assembly of non-centrosomal microtubule arrays that determine the position of nuclei within intracellular compartments in the epidermis and this is independent of ptrn-1 activity. This chain is Non-centrosomal microtubule array protein 1, found in Caenorhabditis elegans.